We begin with the raw amino-acid sequence, 395 residues long: Elongation factor Tu (395 aa).

The region spanning 10-204 (LPHVNIGTIG…AVDEYIPTPQ (195 aa)) is the tr-type G domain. The tract at residues 19-26 (GHVDHGKT) is G1. 19–26 (GHVDHGKT) is a GTP binding site. Threonine 26 lines the Mg(2+) pocket. Residues 60–64 (GITIN) are G2. The interval 81–84 (DCPG) is G3. Residues 81-85 (DCPGH) and 136-139 (NKCD) contribute to the GTP site. A G4 region spans residues 136-139 (NKCD). Residues 174 to 176 (SAL) form a G5 region.

Belongs to the TRAFAC class translation factor GTPase superfamily. Classic translation factor GTPase family. EF-Tu/EF-1A subfamily. Monomer.

The protein localises to the cytoplasm. It catalyses the reaction GTP + H2O = GDP + phosphate + H(+). Its function is as follows. GTP hydrolase that promotes the GTP-dependent binding of aminoacyl-tRNA to the A-site of ribosomes during protein biosynthesis. In Mycoplasma capricolum subsp. capricolum (strain California kid / ATCC 27343 / NCTC 10154), this protein is Elongation factor Tu.